The following is a 1310-amino-acid chain: Multidrug resistance protein 4 (1310 aa).

5 helical membrane-spanning segments follow: residues 48 to 68 (WLDLILLAVGIFGSIGCGVLT), 125 to 145 (MVCFAIGSGVGSFLMTFCFFV), 196 to 216 (KFGIIFQTTTSFIAGYAIGFA), 223 to 243 (LVIMSMSPFIVLSMTLLAVFA), and 299 to 319 (GLTVGLGLGAVMFFIMGAFSL). Residues 55–368 (AVGIFGSIGC…IAIPLNIFAT (314 aa)) form the ABC transmembrane type-1 1 domain. A glycan (N-linked (GlcNAc...) asparagine) is linked at N336. A helical membrane pass occupies residues 342–362 (VMIVFICVLIATQGLSIIAIP). The N-linked (GlcNAc...) asparagine glycan is linked to N402. In terms of domain architecture, ABC transporter 1 spans 403–642 (ITLEDVQFRY…KGTYYGLVKR (240 aa)). 438 to 445 (GASGCGKS) is a binding site for ATP. N-linked (GlcNAc...) asparagine glycosylation is present at N608. The next 2 membrane-spanning stretches (helical) occupy residues 721 to 741 (WFLSTFGFIGGIGGGAIFPFF) and 773 to 793 (IIVVVIGVASFLSFFMYIGLF). One can recognise an ABC transmembrane type-1 2 domain in the interval 722 to 1030 (FLSTFGFIGG…LGNIVPDIGK (309 aa)). N816 carries N-linked (GlcNAc...) asparagine glycosylation. Transmembrane regions (helical) follow at residues 849 to 869 (VGNVIHIISTIGFALGIAFYY), 871 to 891 (WKVSLAVMAVSPVLIVVVFIN), and 945 to 965 (IGIYKWAPLLSIFMCLTTLLT). Positions 1065-1304 (IEFKDICFRY…KGFYYTLAMQ (240 aa)) constitute an ABC transporter 2 domain. 1100 to 1107 (GASGCGKS) serves as a coordination point for ATP.

It belongs to the ABC transporter superfamily. ABCB family. Multidrug resistance exporter (TC 3.A.1.201) subfamily.

The protein resides in the membrane. The catalysed reaction is ATP + H2O + xenobioticSide 1 = ADP + phosphate + xenobioticSide 2.. In terms of biological role, energy-dependent efflux pump responsible for decreased drug accumulation in multidrug resistance parasites. In Entamoeba histolytica (strain ATCC 30459 / HM-1:IMSS / ABRM), this protein is Multidrug resistance protein 4.